The following is a 793-amino-acid chain: Serine/threonine-protein kinase MARK1 (793 aa).

A disordered region spans residues 1 to 40 (MSARTPLPTVNERDTENHTSVDGYTETHIPPTKSSSRQNI). Position 5 is a phosphothreonine (Thr5). The 252-residue stretch at 60 to 311 (YRLQKTIGKG…LEQIMKDRWM (252 aa)) folds into the Protein kinase domain. ATP is bound by residues 66 to 74 (IGKGNFAKV) and Lys89. The active-site Proton acceptor is Asp182. Phosphothreonine is present on Thr208. The residue at position 215 (Thr215) is a Phosphothreonine; by LKB1 and TAOK1. At Ser219 the chain carries Phosphoserine; by GSK3-beta. The UBA domain occupies 329–370 (DLNDAKRIDIMVTMGFARDEINDALVSQKYDEVMATYILLGR). 2 disordered regions span residues 377 to 499 (GGES…GGSM) and 517 to 697 (LQNG…KPRS). Over residues 380 to 403 (SLSSGNLCQRSRPSSDLNNSTLQS) the composition is skewed to polar residues. 6 positions are modified to phosphoserine: Ser382, Ser390, Ser393, Ser403, Ser423, and Ser444. Basic and acidic residues predominate over residues 447–459 (SEQKEEWDKDTAR). Residues 462 to 473 (GSTTVGSKSEVT) are compositionally biased toward polar residues. A Phosphoserine modification is found at Ser475. The segment covering 487 to 499 (AGPSNNVYSGGSM) has biased composition (polar residues). Composition is skewed to low complexity over residues 523-547 (SSLTEMSASSMSSTGSTVASAGPSA) and 585-599 (PAASPSAHSISASTP). Residue Ser588 is modified to Phosphoserine. A Phosphothreonine; by PKC/PRKCZ modification is found at Thr613. The span at 647 to 657 (GTSTGIISKIT) shows a compositional bias: polar residues. 2 stretches are compositionally biased toward basic and acidic residues: residues 661–676 (VRRDPSEGEASGRTDT) and 683–695 (EPKDKEEGKEAKP). Ser666 carries the phosphoserine modification. Positions 744–793 (DARQDSLVQWEMEVCKLPRLSLNGVRFKRISGTSIAFKNIASKIANELKL) constitute a KA1 domain.

Belongs to the protein kinase superfamily. CAMK Ser/Thr protein kinase family. SNF1 subfamily. As to quaternary structure, interacts with MAPT/TAU. Mg(2+) is required as a cofactor. In terms of processing, phosphorylation at Thr-613 by PRKCZ/aPKC in polarized epithelial cells inhibits the kinase activity. Phosphorylated at Thr-215 by STK11/LKB1 in complex with STE20-related adapter-alpha (STRADA) pseudo kinase and CAB39. Phosphorylation at Thr-215 by TAOK1 activates the kinase activity, leading to phosphorylation and detachment of MAPT/TAU from microtubules. Phosphorylation at Ser-219 by GSK3-beta (GSK3B) inhibits the kinase activity. Highly expressed in brain and spleen and at lower levels in kidney and skeletal muscle.

The protein resides in the cell membrane. It is found in the cytoplasm. It localises to the cytoskeleton. The protein localises to the cell projection. Its subcellular location is the dendrite. The enzyme catalyses L-seryl-[protein] + ATP = O-phospho-L-seryl-[protein] + ADP + H(+). The catalysed reaction is L-threonyl-[protein] + ATP = O-phospho-L-threonyl-[protein] + ADP + H(+). It carries out the reaction L-seryl-[tau protein] + ATP = O-phospho-L-seryl-[tau protein] + ADP + H(+). It catalyses the reaction L-threonyl-[tau protein] + ATP = O-phospho-L-threonyl-[tau protein] + ADP + H(+). Its activity is regulated as follows. Activated by phosphorylation on Thr-215. Inhibited by phosphorylation at Ser-219. Its function is as follows. Serine/threonine-protein kinase. Involved in cell polarity and microtubule dynamics regulation. Phosphorylates DCX, MAP2 and MAP4. Phosphorylates the microtubule-associated protein MAPT/TAU. Involved in cell polarity by phosphorylating the microtubule-associated proteins MAP2, MAP4 and MAPT/TAU at KXGS motifs, causing detachment from microtubules, and their disassembly. Involved in the regulation of neuronal migration through its dual activities in regulating cellular polarity and microtubule dynamics, possibly by phosphorylating and regulating DCX. Also acts as a positive regulator of the Wnt signaling pathway, probably by mediating phosphorylation of dishevelled proteins (DVL1, DVL2 and/or DVL3). This is Serine/threonine-protein kinase MARK1 from Rattus norvegicus (Rat).